The chain runs to 193 residues: Ion-translocating oxidoreductase complex subunit A (193 aa).

The next 6 helical transmembrane spans lie at 5–25 (LLLF…FLGL), 39–59 (IGMG…AWMV), 62–82 (FILL…LVIA), 102–122 (LLGI…VALL), 134–154 (AVYG…FAAI), and 171–191 (SIAL…TGLV).

Belongs to the NqrDE/RnfAE family. As to quaternary structure, the complex is composed of six subunits: RnfA, RnfB, RnfC, RnfD, RnfE and RnfG.

Its subcellular location is the cell inner membrane. In terms of biological role, part of a membrane-bound complex that couples electron transfer with translocation of ions across the membrane. The protein is Ion-translocating oxidoreductase complex subunit A of Yersinia pestis bv. Antiqua (strain Nepal516).